The chain runs to 280 residues: Formamidopyrimidine-DNA glycosylase (280 aa).

The Schiff-base intermediate with DNA role is filled by Pro-2. Glu-3 acts as the Proton donor in catalysis. Lys-58 serves as the catalytic Proton donor; for beta-elimination activity. Residues His-91, Arg-110, and Arg-152 each contribute to the DNA site. Residues 237–271 form an FPG-type zinc finger; the sequence is NVYGRENLPCPQCDSAIEKVVLNQRAAYFCSNCQK. The active-site Proton donor; for delta-elimination activity is the Arg-261.

It belongs to the FPG family. In terms of assembly, monomer. It depends on Zn(2+) as a cofactor.

It carries out the reaction Hydrolysis of DNA containing ring-opened 7-methylguanine residues, releasing 2,6-diamino-4-hydroxy-5-(N-methyl)formamidopyrimidine.. The catalysed reaction is 2'-deoxyribonucleotide-(2'-deoxyribose 5'-phosphate)-2'-deoxyribonucleotide-DNA = a 3'-end 2'-deoxyribonucleotide-(2,3-dehydro-2,3-deoxyribose 5'-phosphate)-DNA + a 5'-end 5'-phospho-2'-deoxyribonucleoside-DNA + H(+). Involved in base excision repair of DNA damaged by oxidation or by mutagenic agents. Acts as a DNA glycosylase that recognizes and removes damaged bases. Has a preference for oxidized purines, such as 7,8-dihydro-8-oxoguanine (8-oxoG). Has AP (apurinic/apyrimidinic) lyase activity and introduces nicks in the DNA strand. Cleaves the DNA backbone by beta-delta elimination to generate a single-strand break at the site of the removed base with both 3'- and 5'-phosphates. This chain is Formamidopyrimidine-DNA glycosylase, found in Hydrogenovibrio crunogenus (strain DSM 25203 / XCL-2) (Thiomicrospira crunogena).